The chain runs to 3948 residues: Hybrid PKS-NRPS synthetase ucsA (3948 aa).

Residues 11–440 (NEPIAVIGSG…GTNAHAILER (430 aa)) enclose the Ketosynthase family 3 (KS3) domain. Catalysis depends on for beta-ketoacyl synthase activity residues cysteine 184, histidine 323, and histidine 363. A malonyl-CoA:ACP transacylase (MAT) domain region spans residues 548-881 (IFTGQGAQWP…FSTAIGQLWA (334 aa)). The interval 940 to 1079 (HPLLGTLGAD…GHIRLTITDF (140 aa)) is N-terminal hotdog fold. A dehydratase (DH) domain region spans residues 940-1254 (HPLLGTLGAD…IRLIPFAAAS (315 aa)). The 317-residue stretch at 940–1256 (HPLLGTLGAD…LIPFAAASEA (317 aa)) folds into the PKS/mFAS DH domain. Catalysis depends on histidine 972, which acts as the Proton acceptor; for dehydratase activity. A C-terminal hotdog fold region spans residues 1098-1256 (MTEVDQNLFY…LIPFAAASEA (159 aa)). Aspartate 1161 serves as the catalytic Proton donor; for dehydratase activity. The tract at residues 1299 to 1460 (LAHVVGQITH…LRAGFTGVET (162 aa)) is methyltransferase (MT) domain. The interval 1989–2165 (TYILFGLAGA…ASVIDIGPIS (177 aa)) is ketoreductase (KR) domain. Residues 2275 to 2357 (DVARVLRHAI…GLVDFAVDNL (83 aa)) enclose the Carrier 1 domain. The residue at position 2317 (serine 2317) is an O-(pantetheine 4'-phosphoryl)serine. Residues 2381–2404 (PKAKTDAPAAAPTPASATAPGSKS) show a composition bias toward low complexity. Positions 2381–2473 (PKAKTDAPAA…SSQAASLESS (93 aa)) are disordered. Composition is skewed to polar residues over residues 2405–2418 (DGNV…ADQS) and 2426–2437 (PQPTAILTNATA). The span at 2441 to 2456 (PVSPSLSVTGSTSSAA) shows a compositional bias: low complexity. Positions 2462-2473 (PTSSQAASLESS) are enriched in polar residues. A condensation (C) domain region spans residues 2489–2926 (EKTLPMSYGQ…PQIFNSSKVQ (438 aa)). Residues 2950–3355 (DIAAVQPTLT…GEFVLQARIK (406 aa)) are adenylation (A) (KR) domain. The segment at 3483 to 3507 (PLTNKGGLKETPVARPTRYQNDPIP) is disordered. The region spanning 3513–3592 (SSPFSSLDQV…QMASLLDGKD (80 aa)) is the Carrier 2 domain. Serine 3552 is modified (O-(pantetheine 4'-phosphoryl)serine). The tract at residues 3633–3852 (LTGATGFLGL…QFVPVEDVAN (220 aa)) is reductase (R) domain.

This sequence in the C-terminal section; belongs to the NRP synthetase family.

It functions in the pathway mycotoxin biosynthesis. Hybrid PKS-NRPS synthetase; part of the gene cluster that mediates the biosynthesis of UCS1025A, a member of the pyrrolizidinone family that acts as a strong telomerase inhibitor and displays potent antibacterial and antitumor properties. These compounds share a hemiaminal-containing pyrrolizidinone core fused with a gamma-lactone, giving a furopyrrolizidine that is connected to a decalin fragment. The polyketide synthase module (PKS) of the PKS-NRPS ucsA is responsible for the synthesis of the polyketide backbone via the condensation of an acetyl-CoA starter unit with 6 malonyl-CoA units. The downstream nonribosomal peptide synthetase (NRPS) module then amidates the carboxyl end of the polyketide with a 2S,3S-methylproline derived from L-isoleucine by the 2-oxoglutarate-dependent dioxygenase ucsF which converts L-isoleucine to (4S,5S)-4-methylpyrroline-5-carboxylate that is further converted to 2S,3S-methylproline by the pyrroline-5-carboxylate reductase ucsG. Reductive release of the completed aminoacyl polyketide from the assembly line can form the 3-pyrrolin-2-one structure via an intramolecular Knoevenagel reaction. Because ucsA lacks a designated enoylreductase (ER) domain, the required activity is provided the enoyl reductase ucsL. This keto acyclic precursor is the substrate of the Diels-Alderase ucsH, that catalyzes the Diels-Alder cycloaddition. Oxidation of the 3S-methyl group to a carboxylate by the cytochrome P450 monooxygenase ucsK allows an oxa-Michael cyclization that might involve the reductase/dehydrogenase ucsI and which furnishes the furopyrrolizidine. The oxidase ucsJ likely plays a critical role in stereoselective reduction of the C5-C6 double bond to afford the required R-configured carboxylate group. Further enolization and oxidation at C5 by an unidentified enzyme affords the last intermediate that can undergo oxa-Michael cyclization to yield UCS1025A. The chain is Hybrid PKS-NRPS synthetase ucsA from Acremonium sp.